A 246-amino-acid chain; its full sequence is Caffeoyl-CoA O-methyltransferase 1 (246 aa).

Residue K21 participates in substrate binding. S-adenosyl-L-methionine contacts are provided by residues T63, E85, 87–88, S93, D111, and A140; that span reads GV. A substrate-binding site is contributed by D162. D162 serves as a coordination point for a divalent metal cation. D164 contacts S-adenosyl-L-methionine. The a divalent metal cation site is built by D188 and N189. Substrate is bound at residue N193.

The protein belongs to the class I-like SAM-binding methyltransferase superfamily. Cation-dependent O-methyltransferase family. CCoAMT subfamily. It depends on a divalent metal cation as a cofactor.

It catalyses the reaction (E)-caffeoyl-CoA + S-adenosyl-L-methionine = (E)-feruloyl-CoA + S-adenosyl-L-homocysteine + H(+). It participates in aromatic compound metabolism; phenylpropanoid biosynthesis. In terms of biological role, methylates caffeoyl-CoA to feruloyl-CoA and 5-hydroxyferuloyl-CoA to sinapoyl-CoA. Plays a role in the synthesis of feruloylated polysaccharides. Involved in the reinforcement of the plant cell wall. Also involved in the responding to wounding or pathogen challenge by the increased formation of cell wall-bound ferulic acid polymers. The polypeptide is Caffeoyl-CoA O-methyltransferase 1 (CCOMT) (Eucalyptus globulus (Tasmanian blue gum)).